We begin with the raw amino-acid sequence, 601 residues long: Glutathione-regulated potassium-efflux system protein KefB (601 aa).

Helical transmembrane passes span 4–24 (SDLL…VPLA), 29–49 (IGAV…GLGF), 55–75 (EILH…GLEL), 87–107 (IFGV…GLLM), 115–135 (AAVV…LQLM), 152–172 (VLLF…LLAG), 177–197 (HVNW…LIGG), 207–227 (FIAS…LVLG), 230–250 (LFME…GVLL), 268–288 (GLLL…GVLY), 291–311 (LLWV…VLYL), 326–346 (FAGV…LPAS), and 356–376 (ALLL…MKGI). The region spanning 400-519 (KPQVIIVGFG…AGVTQFSRET (120 aa)) is the RCK N-terminal domain.

Belongs to the monovalent cation:proton antiporter 2 (CPA2) transporter (TC 2.A.37) family. KefB subfamily. Interacts with the regulatory subunit KefG.

The protein resides in the cell inner membrane. Its function is as follows. Pore-forming subunit of a potassium efflux system that confers protection against electrophiles. Catalyzes K(+)/H(+) antiport. The chain is Glutathione-regulated potassium-efflux system protein KefB from Klebsiella pneumoniae (strain 342).